Consider the following 217-residue polypeptide: RNA chaperone ProQ (217 aa).

Positions 105–166 are disordered; sequence EAKARVQAQR…PREEQHTPVS (62 aa). Over residues 121–131 the composition is skewed to basic residues; it reads KRERKPRPTTP. A compositionally biased stretch (basic and acidic residues) spans 132–162; sequence RRKEGAERKPRAQKPVEKAPKTVKAPREEQH.

The protein belongs to the ProQ family.

It is found in the cytoplasm. Functionally, RNA chaperone with significant RNA binding, RNA strand exchange and RNA duplexing activities. May regulate ProP activity through an RNA-based, post-transcriptional mechanism. The chain is RNA chaperone ProQ from Escherichia coli O8 (strain IAI1).